We begin with the raw amino-acid sequence, 376 residues long: Lipoprotein p33 (376 aa).

An N-terminal signal peptide occupies residues 1–30 (MKIKKIKLLKALALTGAFGIVATVPVIVSS). The N-palmitoyl cysteine moiety is linked to residue cysteine 31. Residue cysteine 31 is the site of S-diacylglycerol cysteine attachment. A disordered region spans residues 33–59 (STDNNGGTGDNNTGGGGSGTDQQQGTT). The span at 38-51 (GGTGDNNTGGGGSG) shows a compositional bias: gly residues.

Belongs to the p35 lipoprotein family.

Its subcellular location is the cell membrane. This chain is Lipoprotein p33, found in Malacoplasma penetrans (strain HF-2) (Mycoplasma penetrans).